The chain runs to 424 residues: Serpin E3 (424 aa).

The N-terminal stretch at 1-20 is a signal peptide; sequence MPPFLITLFLFHSCCLRANG. Asn46 is a glycosylation site (N-linked (GlcNAc...) asparagine). Residues 143-174 are disordered; the sequence is DLSEPNSTAIQTSEGASRETAGGGPSEGPGGW. Polar residues predominate over residues 146-157; the sequence is EPNSTAIQTSEG. Over residues 163 to 173 the composition is skewed to gly residues; that stretch reads AGGGPSEGPGG.

Belongs to the serpin family.

The protein resides in the secreted. Probable serine protease inhibitor. In Homo sapiens (Human), this protein is Serpin E3 (SERPINE3).